The chain runs to 306 residues: Pyridoxal 5'-phosphate synthase subunit SNZERR (306 aa).

Position 34 (Asp-34) interacts with D-ribose 5-phosphate. The active-site Schiff-base intermediate with D-ribose 5-phosphate is Lys-91. Gly-163 contacts D-ribose 5-phosphate. Arg-175 contacts D-glyceraldehyde 3-phosphate. D-ribose 5-phosphate contacts are provided by residues Gly-224 and 245-246 (GS).

Belongs to the PdxS/SNZ family.

The enzyme catalyses aldehydo-D-ribose 5-phosphate + D-glyceraldehyde 3-phosphate + L-glutamine = pyridoxal 5'-phosphate + L-glutamate + phosphate + 3 H2O + H(+). It functions in the pathway cofactor biosynthesis; pyridoxal 5'-phosphate biosynthesis. Functionally, catalyzes the formation of pyridoxal 5'-phosphate from ribose 5-phosphate (RBP), glyceraldehyde 3-phosphate (G3P) and ammonia. The ammonia is provided by PDX2. Can also use ribulose 5-phosphate and dihydroxyacetone phosphate as substrates, resulting from enzyme-catalyzed isomerization of RBP and G3P, respectively. Also plays an indirect role in resistance to singlet oxygen-generating photosensitizers. This chain is Pyridoxal 5'-phosphate synthase subunit SNZERR (SNZERR), found in Suberites domuncula (Sponge).